A 326-amino-acid polypeptide reads, in one-letter code: L-lactate dehydrogenase (326 aa).

NAD(+) contacts are provided by residues valine 20, aspartate 41, lysine 46, tyrosine 71, and 85 to 86 (GA). Residues glutamine 88 and arginine 94 each contribute to the substrate site. NAD(+)-binding positions include serine 107, 124–126 (AAN), and serine 149. 126 to 129 (NPVD) is a substrate binding site. Residue 154-157 (DTAR) coordinates substrate. Beta-D-fructose 1,6-bisphosphate-binding positions include arginine 159, 171–174 (RSVH), and histidine 174. Histidine 181 functions as the Proton acceptor in the catalytic mechanism. The residue at position 226 (tyrosine 226) is a Phosphotyrosine. Residue threonine 235 coordinates substrate.

It belongs to the LDH/MDH superfamily. LDH family. As to quaternary structure, homotetramer.

It localises to the cytoplasm. It carries out the reaction (S)-lactate + NAD(+) = pyruvate + NADH + H(+). It functions in the pathway fermentation; pyruvate fermentation to lactate; (S)-lactate from pyruvate: step 1/1. Allosterically activated by fructose 1,6-bisphosphate (FBP) alone under acidic conditions, while it requires additional activation factors such as divalent cations (Mn(2+)) under neutral conditions. Under acidic conditions, Mn(2+) is an inhibitor in the absence of fructose 1,6-bisphosphate (FBP). In case of L.casei, L-LDH binds four fructose 1,6-bisphosphate (FBP) molecules per tetramer, while usual allosteric L-LDH binds only two fructose 1,6-bisphosphate (FBP) molecules per tetramer. In terms of biological role, catalyzes the conversion of lactate to pyruvate. The polypeptide is L-lactate dehydrogenase (Lacticaseibacillus casei (Lactobacillus casei)).